The following is a 900-amino-acid chain: Periodic tryptophan protein 2 (900 aa).

WD repeat units lie at residues 10–47 (GAPYRGGNAVITKNTQLISPVGNRVSVTDLSKNHSVTL), 50–89 (ETSTNICRLASSPDGTFLLAVDEQNRCLFINLPRRVVLHR), 91–129 (TFKDKVGALKFSPNGKFIAVGIGKLVEIWRSPGFRRAVL), 139–178 (NSDDKVVSLEWSLDSDYLLVGSRDLAARLFCVRKLKGVLN), and 185–229 (GHRD…VKMD). Positions 228-284 (MDESEDGHSEPPSPVTPDRADEVMVENGGGVGTELKKRKEYDGKGLESDEEGDDDDE) are disordered. Basic and acidic residues predominate over residues 261–274 (ELKKRKEYDGKGLE). The residue at position 275 (serine 275) is a Phosphoserine. Residues 275–284 (SDEEGDDDDE) are compositionally biased toward acidic residues. WD repeat units lie at residues 302-341 (QASAKVTACDYHQGLDMVVVGFSNGVFGLYQMPDFICIHL), 344-384 (ISRQ…YILK), 387-426 (GHYFDVNCVTYSPDSQLLATGADDNKVKVWNVMSGTCFIT), 429-468 (EHTNAVTALHFMADNHSLLSASLDGTVRAWDFKRYKNYKT), 472-512 (PTPR…IKDI), 515-554 (GHEAPVHGLMFSPLTQLLASSSWDYTVRLWDVFASKGTVE), 557-596 (RHNHDVLTVAFRPDGKQLASSTLDGQINFWDTIEGVLMYT), and 619-658 (SSGKCFTTLCYSADGGYILAAGTSRYICMYDIADQVLLRR). A disordered region spans residues 684 to 720 (PIDLIDDDNSDEEGGIDKQSRGNLGYDLPGSRPNRGR). Residues 687-697 (LIDDDNSDEEG) are compositionally biased toward acidic residues. A WD 14 repeat occupies 720-759 (RPIIRTKSLSIAPTGRSFAAATTEGVLIFSIDDTFIFDPT).

This sequence belongs to the WD repeat PWP2 family. Component of the ribosomal small subunit (SSU) processome. Interacts with TBP1 in the nucleus. Expressed constitutively and ubiquitously; observed in seeds, seedlings, roots, leaves, stems, flowers and siliques.

The protein localises to the nucleus. The protein resides in the nucleolus. In terms of biological role, involved in nucleolar processing of pre-18S ribosomal RNA. Plays a role early in ribosome biogenesis, especially in the maturation of 5.8S rRNA. Required for guard cell functions. The chain is Periodic tryptophan protein 2 from Arabidopsis thaliana (Mouse-ear cress).